Consider the following 375-residue polypeptide: Protein kinase MCK1 (375 aa).

Ser2 bears the N-acetylserine mark. The 293-residue stretch at 35–327 (VKEYRKIGRG…PRRILAHQFF (293 aa)) folds into the Protein kinase domain. ATP is bound by residues 41–49 (IGRGAFGTV) and Lys68. Asp164 serves as the catalytic Proton acceptor. A Phosphoserine modification is found at Ser198. Tyr199 is modified (phosphotyrosine). Ser202 carries the phosphoserine modification.

Belongs to the protein kinase superfamily. Ser/Thr protein kinase family. In terms of processing, phosphorylated at tyrosine and serine.

The enzyme catalyses L-seryl-[protein] + ATP = O-phospho-L-seryl-[protein] + ADP + H(+). It catalyses the reaction L-threonyl-[protein] + ATP = O-phospho-L-threonyl-[protein] + ADP + H(+). It carries out the reaction L-tyrosyl-[protein] + ATP = O-phospho-L-tyrosyl-[protein] + ADP + H(+). May be an autophosphorylating tyrosine kinase, a bifunctional (serine/tyrosine-specific) protein kinase, or a serine kinase that is a substrate for an associated tyrosine kinase. MCK1 is a transcriptional activator of IME1, it stimulates spore maturation, and play a positive regulatory role in both mitotic centromere function and activation of early meiotic gene expression. In Saccharomyces cerevisiae (strain ATCC 204508 / S288c) (Baker's yeast), this protein is Protein kinase MCK1 (MCK1).